The following is a 362-amino-acid chain: Probable endopolygalacturonase B (362 aa).

A signal peptide spans 1–20 (MHFLQNAVVAATMGAALAAA). Residues 21–25 (APLEK) constitute a propeptide that is removed on maturation. The cysteines at positions 28 and 43 are disulfide-linked. PbH1 repeat units follow at residues 155–184 (ADHLTITDVTIDNSAGTSKGHNTDAFDIGQ), 185–206 (STYITIDGATVYNQDDCLAINS), 207–227 (GEHITFTNGYCDGGHGLSIGS), 236–257 (VNDVTISNSKVLNSQNGVRIKT), 265–287 (VENVKFEDITLSDISKYGIVVEQ), and 299–344 (TNGV…DVTG). Residue D199 is the Proton donor of the active site. C201 and C217 are disulfide-bonded. H221 is a catalytic residue. Residues C327 and C332 are joined by a disulfide bond. N334 carries an N-linked (GlcNAc...) asparagine glycan. A disulfide bridge links C351 with C360.

This sequence belongs to the glycosyl hydrolase 28 family.

Its subcellular location is the secreted. The enzyme catalyses (1,4-alpha-D-galacturonosyl)n+m + H2O = (1,4-alpha-D-galacturonosyl)n + (1,4-alpha-D-galacturonosyl)m.. In terms of biological role, involved in maceration and soft-rotting of plant tissue. Hydrolyzes the 1,4-alpha glycosidic bonds of de-esterified pectate in the smooth region of the plant cell wall. This chain is Probable endopolygalacturonase B (pgaB), found in Aspergillus niger (strain ATCC MYA-4892 / CBS 513.88 / FGSC A1513).